The following is a 216-amino-acid chain: LexA repressor (216 aa).

Positions 28–48 (RAEIAAELGFSSANSAEEHLR) form a DNA-binding region, H-T-H motif. Residues S134 and K171 each act as for autocatalytic cleavage activity in the active site.

The protein belongs to the peptidase S24 family. Homodimer.

It carries out the reaction Hydrolysis of Ala-|-Gly bond in repressor LexA.. Its function is as follows. Represses a number of genes involved in the response to DNA damage (SOS response), including recA and lexA. In the presence of single-stranded DNA, RecA interacts with LexA causing an autocatalytic cleavage which disrupts the DNA-binding part of LexA, leading to derepression of the SOS regulon and eventually DNA repair. The polypeptide is LexA repressor (Paraburkholderia phytofirmans (strain DSM 17436 / LMG 22146 / PsJN) (Burkholderia phytofirmans)).